Reading from the N-terminus, the 1037-residue chain is Importin-8 (1037 aa).

Residues 22–102 form the Importin N-terminal domain; the sequence is AENELNQSYK…RDNIVEGIIR (81 aa). Positions 886–895 are enriched in basic and acidic residues; that stretch reads DRSKAEKADM. The tract at residues 886-934 is disordered; sequence DRSKAEKADMEENEEISSDEEETNVTAQAMQSNNGRGEDEEEEDDDWDE. Acidic residues predominate over residues 896-908; the sequence is EENEEISSDEEET. Phosphoserine occurs at positions 902 and 903. The segment covering 909 to 920 has biased composition (polar residues); that stretch reads NVTAQAMQSNNG. Over residues 923–934 the composition is skewed to acidic residues; that stretch reads EDEEEEDDDWDE.

The protein belongs to the importin beta family. As to quaternary structure, forms a heterodimer with KPNB1. Interacts with SRP19. Interacts with RPL23A. Binds directly to nuclear pore complexes. Interacts with LRPPRC; the interaction occurs when LRPPRC is in its RNA-free form and promotes import of LRPPRC to the nucleus to allow for EIF4E-mediated export of mRNAS from the nucleus to the cytoplasm.

Its subcellular location is the cytoplasm. The protein localises to the nucleus. Involved in nuclear protein import, either by acting as autonomous nuclear transport receptor or as an adapter-like protein in association with the importin-beta subunit KPNB1. Acting autonomously, may serve as receptor for nuclear localization signals (NLS) and promote translocation of import substrates through the nuclear pore complex (NPC) by an energy requiring, Ran-dependent mechanism. At the nucleoplasmic side of the NPC, Ran binds to importin, the importin/substrate complex dissociates and importin is re-exported from the nucleus to the cytoplasm where GTP hydrolysis releases Ran. The directionality of nuclear import is thought to be conferred by an asymmetric distribution of the GTP- and GDP-bound forms of Ran between the cytoplasm and nucleus. In vitro mediates the nuclear import of the signal recognition particle protein SRP19. May also be involved in cytoplasm-to-nucleus shuttling of a broad spectrum of other cargos, including Argonaute-microRNAs complexes, the JUN protein, RELA/NF-kappa-B p65 subunit, the translation initiation factor EIF4E and a set of receptor-activated mothers against decapentaplegic homolog (SMAD) transcription factors that play a critical role downstream of the large family of transforming growth factor beta and bone morphogenetic protein (BMP) cytokines. This Homo sapiens (Human) protein is Importin-8 (IPO8).